A 917-amino-acid chain; its full sequence is Translation initiation factor IF-2 (917 aa).

A disordered region spans residues 1–312; sequence MEEQKSIKET…KGGREENENT (312 aa). Over residues 20–30 the composition is skewed to basic residues; that stretch reads TKKKLVIKKKA. A compositionally biased stretch (polar residues) spans 41-59; it reads PGAQGQTTATEAKQSSPAS. Basic and acidic residues-rich tracts occupy residues 60–76 and 95–118; these read SDKK…EAKR and RPDR…RKPE. Gly residues-rich tracts occupy residues 132–141, 167–256, and 281–293; these read SGGGQGGGNQ, QTGG…GYQG, and APGG…GPGG. Over residues 297–312 the composition is skewed to basic and acidic residues; the sequence is RVFDKEKGGREENENT. In terms of domain architecture, tr-type G spans 414 to 587; sequence TRPPVVTIMG…ELLDHKANPK (174 aa). The G1 stretch occupies residues 423–430; sequence GHVDHGKT. A GTP-binding site is contributed by 423–430; the sequence is GHVDHGKT. A G2 region spans residues 448-452; the sequence is GITQH. The segment at 469–472 is G3; it reads DTPG. Residues 469 to 473 and 523 to 526 each bind GTP; these read DTPGH and NKID. A G4 region spans residues 523 to 526; sequence NKID. The G5 stretch occupies residues 559–561; sequence SAK.

This sequence belongs to the TRAFAC class translation factor GTPase superfamily. Classic translation factor GTPase family. IF-2 subfamily.

It is found in the cytoplasm. In terms of biological role, one of the essential components for the initiation of protein synthesis. Protects formylmethionyl-tRNA from spontaneous hydrolysis and promotes its binding to the 30S ribosomal subunits. Also involved in the hydrolysis of GTP during the formation of the 70S ribosomal complex. In Leptospira biflexa serovar Patoc (strain Patoc 1 / ATCC 23582 / Paris), this protein is Translation initiation factor IF-2.